Consider the following 331-residue polypeptide: Protein C10 (331 aa).

It belongs to the poxviridae C4/C10 protein family.

The protein is Protein C10 of Vaccinia virus (strain Copenhagen) (VACV).